The chain runs to 161 residues: MLTLPPENRWLFREPFGTVFSDFSMVLPYIEGKIFCTVGDVVTHNALSAGLIPSIGVIDGFTKRSPYLKMPEIQGHILHVTNPAGTITDELIAALRLAMDEIPCVVMVNGEEDLAVLPLTEILPDGAVILYGQPEEGLVICEVNKQLRANAKKLLTYFVSL.

6 residues coordinate GTP: aspartate 40, valine 41, valine 42, aspartate 59, glutamate 112, and glutamate 135.

It belongs to the GTP-dependent DPCK family.

The catalysed reaction is 3'-dephospho-CoA + GTP = GDP + CoA + H(+). It participates in cofactor biosynthesis; coenzyme A biosynthesis. Functionally, catalyzes the GTP-dependent phosphorylation of the 3'-hydroxyl group of dephosphocoenzyme A to form coenzyme A (CoA). The protein is GTP-dependent dephospho-CoA kinase of Methanocorpusculum labreanum (strain ATCC 43576 / DSM 4855 / Z).